The sequence spans 389 residues: Elongation factor Tu-3 (389 aa).

Residues 10-203 enclose the tr-type G domain; sequence KPHLNIGTMG…AVDTYVPMPE (194 aa). Residues 19 to 26 are G1; that stretch reads GHVDHGKT. 19–26 lines the GTP pocket; the sequence is GHVDHGKT. Residue T26 participates in Mg(2+) binding. The segment at 60–64 is G2; the sequence is GITIN. The tract at residues 81–84 is G3; the sequence is DMPG. Residues 81–85 and 136–139 contribute to the GTP site; these read DMPGH and NKAD. A G4 region spans residues 136-139; it reads NKAD. The segment at 173 to 175 is G5; sequence SGL.

The protein belongs to the TRAFAC class translation factor GTPase superfamily. Classic translation factor GTPase family. EF-Tu/EF-1A subfamily. Monomer.

The protein localises to the cytoplasm. The catalysed reaction is GTP + H2O = GDP + phosphate + H(+). In terms of biological role, GTP hydrolase that promotes the GTP-dependent binding of aminoacyl-tRNA to the A-site of ribosomes during protein biosynthesis. The chain is Elongation factor Tu-3 from Streptomyces ramocissimus.